Here is a 974-residue protein sequence, read N- to C-terminus: Phosphoenolpyruvate carboxylase 1 (974 aa).

Catalysis depends on residues His164 and Lys604.

Belongs to the PEPCase type 1 family. Exists as a homotetramer or heterooligomer. Mg(2+) serves as cofactor.

The protein localises to the cytoplasm. The enzyme catalyses oxaloacetate + phosphate = phosphoenolpyruvate + hydrogencarbonate. Its activity is regulated as follows. Activated by glutamine and dihydroxyacetone phosphate. Inhibited by glutamate, aspartate, 2-oxoglutarate and malate. Functionally, through the carboxylation of phosphoenolpyruvate (PEP) it forms oxaloacetate, a four-carbon dicarboxylic acid source for the tricarboxylic acid cycle. The sequence is that of Phosphoenolpyruvate carboxylase 1 from Chlamydomonas reinhardtii (Chlamydomonas smithii).